The primary structure comprises 38 residues: TGVTYDHRALVIDGXXXVLVSGSIHYPRAASSWYAVET.

The protein belongs to the glycosyl hydrolase 35 family. In terms of assembly, heterodimer of a large and a small subunit. Post-translationally, the small subunit is N-glycosylated.

The catalysed reaction is Hydrolysis of terminal non-reducing beta-D-galactose residues in beta-D-galactosides.. In terms of biological role, involved in cell wall degradation. Degrades polysaccharides containing beta-(1--&gt;4)-linked galactans, acting as an exo-(1--&gt;4)-beta-D-galactanase. This chain is Beta-galactosidase, found in Hordeum vulgare (Barley).